A 236-amino-acid chain; its full sequence is Phosphoribosylaminoimidazole-succinocarboxamide synthase (236 aa).

It belongs to the SAICAR synthetase family.

The catalysed reaction is 5-amino-1-(5-phospho-D-ribosyl)imidazole-4-carboxylate + L-aspartate + ATP = (2S)-2-[5-amino-1-(5-phospho-beta-D-ribosyl)imidazole-4-carboxamido]succinate + ADP + phosphate + 2 H(+). The protein operates within purine metabolism; IMP biosynthesis via de novo pathway; 5-amino-1-(5-phospho-D-ribosyl)imidazole-4-carboxamide from 5-amino-1-(5-phospho-D-ribosyl)imidazole-4-carboxylate: step 1/2. This Rickettsia canadensis (strain McKiel) protein is Phosphoribosylaminoimidazole-succinocarboxamide synthase.